Consider the following 295-residue polypeptide: GTPase Era (295 aa).

Residues 5 to 172 (YCGYAAIIGR…EQAVHQLMPE (168 aa)) enclose the Era-type G domain. Residues 13-20 (GRPNVGKS) form a G1 region. 13–20 (GRPNVGKS) is a GTP binding site. The segment at 39 to 43 (QTTRY) is G2. Positions 60 to 63 (DTPG) are G3. GTP contacts are provided by residues 60-64 (DTPGL) and 121-124 (NKVD). The interval 121-124 (NKVD) is G4. The tract at residues 151-153 (LSA) is G5. A KH type-2 domain is found at 203-279 (LGQEIPYSLA…FLQLWVKVKS (77 aa)).

This sequence belongs to the TRAFAC class TrmE-Era-EngA-EngB-Septin-like GTPase superfamily. Era GTPase family. Monomer.

The protein resides in the cytoplasm. It localises to the cell inner membrane. An essential GTPase that binds both GDP and GTP, with rapid nucleotide exchange. Plays a role in 16S rRNA processing and 30S ribosomal subunit biogenesis and possibly also in cell cycle regulation and energy metabolism. The polypeptide is GTPase Era (Coxiella burnetii (strain CbuK_Q154) (Coxiella burnetii (strain Q154))).